Consider the following 566-residue polypeptide: Malate synthase, glyoxysomal (566 aa).

Residue Arg-179 is the Proton acceptor of the active site. Asp-465 acts as the Proton donor in catalysis. The short motif at 564–566 is the Microbody targeting signal element; sequence SRL.

Belongs to the malate synthase family.

It is found in the glyoxysome. It catalyses the reaction glyoxylate + acetyl-CoA + H2O = (S)-malate + CoA + H(+). The protein operates within carbohydrate metabolism; glyoxylate cycle; (S)-malate from isocitrate: step 2/2. The polypeptide is Malate synthase, glyoxysomal (MLS) (Raphanus sativus (Radish)).